Reading from the N-terminus, the 573-residue chain is Flagellin B (573 aa).

Belongs to the bacterial flagellin family. In terms of assembly, heteromer of FlaA and FlaB. A flagellar filament composed exclusively of FlaA is indistinguishable in length from that of the wild-type and shows a slight reduction in motility. The flagellar filament composed exclusively of the FlaB is severely truncated in length and greatly reduced in motility. Thus, while both flagellins are not necessary for motility, both are required for a fully active flagellar filament.

It is found in the secreted. Its subcellular location is the bacterial flagellum. In terms of biological role, flagellin is the subunit protein which polymerizes to form the filaments of bacterial flagella. The chain is Flagellin B (flaB) from Campylobacter coli.